Reading from the N-terminus, the 291-residue chain is Phosphatidylserine decarboxylase proenzyme (291 aa).

Active-site charge relay system; for autoendoproteolytic cleavage activity residues include D90, H147, and S253. S253 (schiff-base intermediate with substrate; via pyruvic acid; for decarboxylase activity) is an active-site residue. The residue at position 253 (S253) is a Pyruvic acid (Ser); by autocatalysis.

It belongs to the phosphatidylserine decarboxylase family. PSD-B subfamily. Prokaryotic type I sub-subfamily. Heterodimer of a large membrane-associated beta subunit and a small pyruvoyl-containing alpha subunit. Pyruvate serves as cofactor. Is synthesized initially as an inactive proenzyme. Formation of the active enzyme involves a self-maturation process in which the active site pyruvoyl group is generated from an internal serine residue via an autocatalytic post-translational modification. Two non-identical subunits are generated from the proenzyme in this reaction, and the pyruvate is formed at the N-terminus of the alpha chain, which is derived from the carboxyl end of the proenzyme. The autoendoproteolytic cleavage occurs by a canonical serine protease mechanism, in which the side chain hydroxyl group of the serine supplies its oxygen atom to form the C-terminus of the beta chain, while the remainder of the serine residue undergoes an oxidative deamination to produce ammonia and the pyruvoyl prosthetic group on the alpha chain. During this reaction, the Ser that is part of the protease active site of the proenzyme becomes the pyruvoyl prosthetic group, which constitutes an essential element of the active site of the mature decarboxylase.

It localises to the cell membrane. The catalysed reaction is a 1,2-diacyl-sn-glycero-3-phospho-L-serine + H(+) = a 1,2-diacyl-sn-glycero-3-phosphoethanolamine + CO2. It functions in the pathway phospholipid metabolism; phosphatidylethanolamine biosynthesis; phosphatidylethanolamine from CDP-diacylglycerol: step 2/2. Functionally, catalyzes the formation of phosphatidylethanolamine (PtdEtn) from phosphatidylserine (PtdSer). The sequence is that of Phosphatidylserine decarboxylase proenzyme from Photobacterium profundum (strain SS9).